The primary structure comprises 247 residues: Carboxy-S-adenosyl-L-methionine synthase (247 aa).

S-adenosyl-L-methionine-binding positions include Tyr-39, 64-66 (GCS), 89-90 (DN), 117-118 (DI), Asn-132, and Arg-199.

The protein belongs to the class I-like SAM-binding methyltransferase superfamily. Cx-SAM synthase family. As to quaternary structure, homodimer.

The enzyme catalyses prephenate + S-adenosyl-L-methionine = carboxy-S-adenosyl-L-methionine + 3-phenylpyruvate + H2O. Its function is as follows. Catalyzes the conversion of S-adenosyl-L-methionine (SAM) to carboxy-S-adenosyl-L-methionine (Cx-SAM). The protein is Carboxy-S-adenosyl-L-methionine synthase of Escherichia coli O127:H6 (strain E2348/69 / EPEC).